Consider the following 37-residue polypeptide: Cytochrome b6-f complex subunit 5 (37 aa).

Residues 5–25 (LLSGIVLGLVPVTIAGLFVTA) form a helical membrane-spanning segment.

This sequence belongs to the PetG family. As to quaternary structure, the 4 large subunits of the cytochrome b6-f complex are cytochrome b6, subunit IV (17 kDa polypeptide, PetD), cytochrome f and the Rieske protein, while the 4 small subunits are PetG, PetL, PetM and PetN. The complex functions as a dimer.

The protein resides in the plastid. Its subcellular location is the chloroplast thylakoid membrane. In terms of biological role, component of the cytochrome b6-f complex, which mediates electron transfer between photosystem II (PSII) and photosystem I (PSI), cyclic electron flow around PSI, and state transitions. PetG is required for either the stability or assembly of the cytochrome b6-f complex. The polypeptide is Cytochrome b6-f complex subunit 5 (Chlamydomonas moewusii (Chlamydomonas eugametos)).